Here is a 131-residue protein sequence, read N- to C-terminus: Holo-[acyl-carrier-protein] synthase (131 aa).

The Mg(2+) site is built by Asp-8 and Glu-59.

Belongs to the P-Pant transferase superfamily. AcpS family. The cofactor is Mg(2+).

It is found in the cytoplasm. It catalyses the reaction apo-[ACP] + CoA = holo-[ACP] + adenosine 3',5'-bisphosphate + H(+). Its function is as follows. Transfers the 4'-phosphopantetheine moiety from coenzyme A to a Ser of acyl-carrier-protein. In Orientia tsutsugamushi (strain Ikeda) (Rickettsia tsutsugamushi), this protein is Holo-[acyl-carrier-protein] synthase.